Consider the following 120-residue polypeptide: NAD(P)H-quinone oxidoreductase subunit 3, organellar chromatophore (120 aa).

3 helical membrane-spanning segments follow: residues 6 to 26 (GYDA…LALL), 64 to 84 (MFAL…PWAV), and 89 to 109 (LGLL…IALA).

It belongs to the complex I subunit 3 family. As to quaternary structure, NDH is composed of at least 16 different subunits, 5 of which are encoded in the nucleus.

Its subcellular location is the plastid. The protein resides in the organellar chromatophore thylakoid membrane. The enzyme catalyses a plastoquinone + NADH + (n+1) H(+)(in) = a plastoquinol + NAD(+) + n H(+)(out). The catalysed reaction is a plastoquinone + NADPH + (n+1) H(+)(in) = a plastoquinol + NADP(+) + n H(+)(out). NDH shuttles electrons from NAD(P)H:plastoquinone, via FMN and iron-sulfur (Fe-S) centers, to quinones in the photosynthetic chain and possibly in a chloroplast respiratory chain. The immediate electron acceptor for the enzyme in this species is believed to be plastoquinone. Couples the redox reaction to proton translocation, and thus conserves the redox energy in a proton gradient. This is NAD(P)H-quinone oxidoreductase subunit 3, organellar chromatophore from Paulinella chromatophora.